A 236-amino-acid polypeptide reads, in one-letter code: Small ribosomal subunit protein uS2c (236 aa).

It belongs to the universal ribosomal protein uS2 family.

It is found in the plastid. The protein localises to the chloroplast. The polypeptide is Small ribosomal subunit protein uS2c (rps2) (Oryza nivara (Indian wild rice)).